A 539-amino-acid chain; its full sequence is MIO-dependent tyrosine 2,3-aminomutase (539 aa).

The Proton donor/acceptor role is filled by Tyr-63. His-93 is a substrate binding site. Positions 152–154 (ASG) form a cross-link, 5-imidazolinone (Ala-Gly). Ser-153 bears the 2,3-didehydroalanine (Ser) mark. Substrate is bound by residues Asn-205 and Arg-311.

The protein belongs to the TAL/TAM family. Homotetramer; dimer of dimers. Post-translationally, contains an active site 4-methylidene-imidazol-5-one (MIO), which is formed autocatalytically by cyclization and dehydration of residues Ala-Ser-Gly.

The enzyme catalyses L-tyrosine = 3-amino-3-(4-hydroxyphenyl)propanoate. The catalysed reaction is L-tyrosine = (E)-4-coumarate + NH4(+). In terms of biological role, involved in the biosynthesis of the enediyne antitumor antibiotic C-1027. Catalyzes the MIO-dependent deamination of L-tyrosine generating the corresponding alpha,beta-unsaturated acid, (S)-beta-tyrosine. The protein is MIO-dependent tyrosine 2,3-aminomutase of Streptomyces globisporus.